Consider the following 225-residue polypeptide: Orotate phosphoribosyltransferase (225 aa).

Position 31 (lysine 31) interacts with 5-phospho-alpha-D-ribose 1-diphosphate. Residue 39-40 (FF) coordinates orotate. Residues 78-79 (YK), arginine 105, lysine 106, lysine 109, histidine 111, and 130-138 (DDVLTSGKA) contribute to the 5-phospho-alpha-D-ribose 1-diphosphate site. Threonine 134 and arginine 163 together coordinate orotate.

It belongs to the purine/pyrimidine phosphoribosyltransferase family. PyrE subfamily. As to quaternary structure, homodimer.

The catalysed reaction is orotidine 5'-phosphate + diphosphate = orotate + 5-phospho-alpha-D-ribose 1-diphosphate. It functions in the pathway pyrimidine metabolism; UMP biosynthesis via de novo pathway; UMP from orotate: step 1/2. Its function is as follows. Catalyzes the transfer of a ribosyl phosphate group from 5-phosphoribose 1-diphosphate to orotate, leading to the formation of orotidine monophosphate (OMP). This Cryptococcus neoformans var. grubii serotype A (strain H99 / ATCC 208821 / CBS 10515 / FGSC 9487) (Filobasidiella neoformans var. grubii) protein is Orotate phosphoribosyltransferase (URA5).